The sequence spans 746 residues: NAD(P)H-quinone oxidoreductase subunit 5, chloroplastic (746 aa).

16 helical membrane-spanning segments follow: residues 9–29, 40–60, 89–109, 125–145, 147–167, 185–205, 221–241, 258–278, 280–300, 327–347, 354–374, 396–416, 425–445, 547–567, 608–628, and 722–742; these read WIIP…LLLF, WTFL…YLSI, IDPL…LVLI, FAYL…SNLI, VYFF…FWFT, GDFG…SFEF, VNLL…IAKS, TPIS…FLVA, LLPL…IGII, LGYM…FHLI, ALLF…VGYS, TAFL…WFWS, LLFS…TAFY, ILFP…IGIP, FSVS…KPFY, and FYLF…FFFY.

This sequence belongs to the complex I subunit 5 family. NDH is composed of at least 16 different subunits, 5 of which are encoded in the nucleus.

Its subcellular location is the plastid. It localises to the chloroplast thylakoid membrane. The enzyme catalyses a plastoquinone + NADH + (n+1) H(+)(in) = a plastoquinol + NAD(+) + n H(+)(out). It catalyses the reaction a plastoquinone + NADPH + (n+1) H(+)(in) = a plastoquinol + NADP(+) + n H(+)(out). NDH shuttles electrons from NAD(P)H:plastoquinone, via FMN and iron-sulfur (Fe-S) centers, to quinones in the photosynthetic chain and possibly in a chloroplast respiratory chain. The immediate electron acceptor for the enzyme in this species is believed to be plastoquinone. Couples the redox reaction to proton translocation, and thus conserves the redox energy in a proton gradient. This chain is NAD(P)H-quinone oxidoreductase subunit 5, chloroplastic (ndhF), found in Draba nemorosa (Woodland whitlowgrass).